The sequence spans 155 residues: Regulatory protein RecX (155 aa).

Belongs to the RecX family.

It localises to the cytoplasm. Its function is as follows. Modulates RecA activity. This chain is Regulatory protein RecX, found in Pseudomonas fluorescens (strain ATCC BAA-477 / NRRL B-23932 / Pf-5).